The primary structure comprises 558 residues: MSYTKYQRGYFMPPTPSLEWSKKEYIAKAPIWCSVDLRDGNQALITPMSLEEKITFFKLLLKVGFKEIEVGFPAASETEYRFLRTLIEEDLIPDDVSVQVLTQAREHIIKKTFESLEGCKNAIVHVYNSTSYAQREQVFRKSKDEIKHIACEGAICLKESAAATKGNFRFEYSPESFSGTEVDYALEVCNAVIDIFEPTLEKKLIINLPVTVEMSLPHIYASQVEYMSKHLKNRENVLISLHPHNDRGCAIADAELGLLAGADRIEGTLFGNGERTGNVDIITLAMNMHSHGVDPKLDFSNIPSICDVYEKVTKMQVYERQPYSGKLVFAAFSGSHQDAIAKGMAYHKEHNLSTWSVPYLPIDPKDVGRVYESDVIRINSQSGKGGIAYILHHHYGVNLPPLFREEFSYYVKNISDKAHKELSPDEICEIFQNDFVNLNNTLCVQDFHFTHIDSKPSQEFNVKLHILYAKENSKTQQEITGKGNGRLDSIANALREHLNLDFEIIDYSEHSLKKGSTSQAVSYVQIESKGKKCFGVGIDNDIITASIYGLVSALNRII.

The 274-residue stretch at 30 to 303 (PIWCSVDLRD…DPKLDFSNIP (274 aa)) folds into the Pyruvate carboxyltransferase domain. Positions 39, 242, 244, and 278 each coordinate Mg(2+). The segment at 438–558 (LNNTLCVQDF…GLVSALNRII (121 aa)) is regulatory domain.

It belongs to the alpha-IPM synthase/homocitrate synthase family. LeuA type 2 subfamily. Homodimer. Mg(2+) serves as cofactor.

The protein localises to the cytoplasm. It carries out the reaction 3-methyl-2-oxobutanoate + acetyl-CoA + H2O = (2S)-2-isopropylmalate + CoA + H(+). The protein operates within amino-acid biosynthesis; L-leucine biosynthesis; L-leucine from 3-methyl-2-oxobutanoate: step 1/4. Catalyzes the condensation of the acetyl group of acetyl-CoA with 3-methyl-2-oxobutanoate (2-ketoisovalerate) to form 3-carboxy-3-hydroxy-4-methylpentanoate (2-isopropylmalate). This is 2-isopropylmalate synthase from Helicobacter hepaticus (strain ATCC 51449 / 3B1).